The chain runs to 218 residues: Adenylate kinase (218 aa).

10–15 (GAGKGT) lines the ATP pocket. Positions 30-59 (STGDMLRNAAKEGKPLGLEAKKIMDAGQLV) are NMP. AMP contacts are provided by residues T31, R36, 57-59 (QLV), 85-88 (GFPR), and Q92. Residues 122–159 (GRRVHLASGRSYHVMFNPPKQEGLDDATGEPLVQRADD) form an LID region. ATP-binding positions include R123 and 132–133 (SY). Residues R156 and R167 each coordinate AMP. G203 lines the ATP pocket.

Belongs to the adenylate kinase family. Monomer.

It is found in the cytoplasm. The enzyme catalyses AMP + ATP = 2 ADP. It functions in the pathway purine metabolism; AMP biosynthesis via salvage pathway; AMP from ADP: step 1/1. Its function is as follows. Catalyzes the reversible transfer of the terminal phosphate group between ATP and AMP. Plays an important role in cellular energy homeostasis and in adenine nucleotide metabolism. The sequence is that of Adenylate kinase from Chlorobium chlorochromatii (strain CaD3).